Reading from the N-terminus, the 428-residue chain is Forkhead box protein B2 (428 aa).

A DNA-binding region (fork-head) is located at residues 12 to 103; that stretch reads QKPPYSYISL…GDMFENGSFL (92 aa). Disordered regions lie at residues 118–217 and 408–428; these read HLHS…MQEA and PTAAGRADSKGSSLHSVLVHS. Residues 136–163 are compositionally biased toward basic residues; the sequence is LHPHHPHHAHHHHHHHHHAAHHHHHHHP. Pro residues-rich tracts occupy residues 164–174 and 183–192; these read PQPPPPPPPHM and APAPQPPHLP. The span at 193 to 217 shows a compositional bias: low complexity; sequence SQPAQQPQPQSQPPQTSHPGKMQEA.

The protein resides in the nucleus. Its function is as follows. Transcription factor. This Mus musculus (Mouse) protein is Forkhead box protein B2 (Foxb2).